Reading from the N-terminus, the 204-residue chain is Ubiquitin-conjugating enzyme E2 S (204 aa).

A UBC core domain is found at 14 to 160; sequence QIIKQVAREI…AKMFTEIHAK (147 aa). Catalysis depends on Cys98, which acts as the Glycyl thioester intermediate. Residues 165–176 show a composition bias toward polar residues; that stretch reads SSNNISEGQQES. Positions 165–204 are disordered; it reads SSNNISEGQQESLPGKKRVAVNEKMCDKKKKDKKRALKRL. Positions 191–204 are enriched in basic residues; it reads DKKKKDKKRALKRL.

It belongs to the ubiquitin-conjugating enzyme family.

It carries out the reaction S-ubiquitinyl-[E1 ubiquitin-activating enzyme]-L-cysteine + [E2 ubiquitin-conjugating enzyme]-L-cysteine = [E1 ubiquitin-activating enzyme]-L-cysteine + S-ubiquitinyl-[E2 ubiquitin-conjugating enzyme]-L-cysteine.. The protein operates within protein modification; protein ubiquitination. Catalyzes the covalent attachment of ubiquitin to other proteins. Acts as an essential factor of the anaphase promoting complex/cyclosome (APC/C), a cell cycle-regulated ubiquitin ligase that controls progression through mitosis. Acts by specifically elongating polyubiquitin chains initiated by the E2 enzyme UBCH10 on APC/C substrates, enhancing the degradation of APC/C substrates by the proteasome and promoting mitotic exit. The sequence is that of Ubiquitin-conjugating enzyme E2 S from Nematostella vectensis (Starlet sea anemone).